Consider the following 505-residue polypeptide: Exodeoxyribonuclease 7 large subunit (505 aa).

The segment at S466 to F505 is disordered. Residues A480 to P497 are compositionally biased toward pro residues.

This sequence belongs to the XseA family. In terms of assembly, heterooligomer composed of large and small subunits.

Its subcellular location is the cytoplasm. It catalyses the reaction Exonucleolytic cleavage in either 5'- to 3'- or 3'- to 5'-direction to yield nucleoside 5'-phosphates.. In terms of biological role, bidirectionally degrades single-stranded DNA into large acid-insoluble oligonucleotides, which are then degraded further into small acid-soluble oligonucleotides. This Caulobacter vibrioides (strain NA1000 / CB15N) (Caulobacter crescentus) protein is Exodeoxyribonuclease 7 large subunit.